Consider the following 455-residue polypeptide: GTPase Der (455 aa).

EngA-type G domains are found at residues 4 to 169 and 178 to 355; these read PIVA…PKDQ and LRVS…GQHQ. Residues 10 to 17, 57 to 61, 120 to 123, 184 to 191, 233 to 237, and 298 to 301 each bind GTP; these read GRPNVGKS, DTGGL, NKLE, DTAGI, and NKWD. One can recognise a KH-like domain in the interval 356–441; sequence RRVSTSVLNE…PVRFIFRGKP (86 aa).

It belongs to the TRAFAC class TrmE-Era-EngA-EngB-Septin-like GTPase superfamily. EngA (Der) GTPase family. Associates with the 50S ribosomal subunit.

In terms of biological role, GTPase that plays an essential role in the late steps of ribosome biogenesis. The chain is GTPase Der from Gloeobacter violaceus (strain ATCC 29082 / PCC 7421).